The primary structure comprises 352 residues: tRNA(Ile)-lysidine synthase (352 aa).

58–63 (SGGADS) contacts ATP.

The protein belongs to the tRNA(Ile)-lysidine synthase family.

The protein resides in the cytoplasm. The catalysed reaction is cytidine(34) in tRNA(Ile2) + L-lysine + ATP = lysidine(34) in tRNA(Ile2) + AMP + diphosphate + H(+). In terms of biological role, ligates lysine onto the cytidine present at position 34 of the AUA codon-specific tRNA(Ile) that contains the anticodon CAU, in an ATP-dependent manner. Cytidine is converted to lysidine, thus changing the amino acid specificity of the tRNA from methionine to isoleucine. This chain is tRNA(Ile)-lysidine synthase, found in Streptomyces coelicolor (strain ATCC BAA-471 / A3(2) / M145).